Here is a 254-residue protein sequence, read N- to C-terminus: Phosphate import ATP-binding protein PstB 2 (254 aa).

An ABC transporter domain is found at 9–249; it reads FNIDNLNLFY…PRDDRTRGYV (241 aa). 41 to 48 contributes to the ATP binding site; it reads GPSGCGKS.

Belongs to the ABC transporter superfamily. Phosphate importer (TC 3.A.1.7) family. In terms of assembly, the complex is composed of two ATP-binding proteins (PstB), two transmembrane proteins (PstC and PstA) and a solute-binding protein (PstS).

It localises to the cell inner membrane. It catalyses the reaction phosphate(out) + ATP + H2O = ADP + 2 phosphate(in) + H(+). Part of the ABC transporter complex PstSACB involved in phosphate import. Responsible for energy coupling to the transport system. In Photobacterium profundum (strain SS9), this protein is Phosphate import ATP-binding protein PstB 2.